We begin with the raw amino-acid sequence, 491 residues long: Protein OrfX3 (491 aa).

This sequence belongs to the TULIP P47 family. As to quaternary structure, heterodimer of OrfX1 and OrfX3; crystallizes as a dimer of heterodimers.

Its function is as follows. Expression of the ptox operon (ntnh-orfX1-orfX2-orfX3-pmp1) in B.thuringiensis kills Anopheles but not Aedes mosquito 3rd instar larvae. The ntnh-pmp1 construct is about half as toxic. This is Protein OrfX3 from Paraclostridium bifermentans (Clostridium bifermentans).